A 275-amino-acid polypeptide reads, in one-letter code: Urease accessory protein UreD (275 aa).

Belongs to the UreD family. In terms of assembly, ureD, UreF and UreG form a complex that acts as a GTP-hydrolysis-dependent molecular chaperone, activating the urease apoprotein by helping to assemble the nickel containing metallocenter of UreC. The UreE protein probably delivers the nickel.

Its subcellular location is the cytoplasm. In terms of biological role, required for maturation of urease via the functional incorporation of the urease nickel metallocenter. In Cereibacter sphaeroides (strain ATCC 17023 / DSM 158 / JCM 6121 / CCUG 31486 / LMG 2827 / NBRC 12203 / NCIMB 8253 / ATH 2.4.1.) (Rhodobacter sphaeroides), this protein is Urease accessory protein UreD.